The primary structure comprises 206 residues: Small ribosomal subunit protein uS4 (206 aa).

The 61-residue stretch at 96-156 (TRLDNVVYRM…EKSRTQARIK (61 aa)) folds into the S4 RNA-binding domain.

The protein belongs to the universal ribosomal protein uS4 family. In terms of assembly, part of the 30S ribosomal subunit. Contacts protein S5. The interaction surface between S4 and S5 is involved in control of translational fidelity.

Its function is as follows. One of the primary rRNA binding proteins, it binds directly to 16S rRNA where it nucleates assembly of the body of the 30S subunit. In terms of biological role, with S5 and S12 plays an important role in translational accuracy. The chain is Small ribosomal subunit protein uS4 from Shewanella sp. (strain ANA-3).